A 287-amino-acid chain; its full sequence is uncharacterized protein (287 aa).

Helical transmembrane passes span 7–28 (LLLT…RAAL), 32–54 (AIDA…AVLL), 67–86 (GWRG…YAYV), 91–113 (GTGA…LLRG), 120–139 (ALLG…LPGA), 144–163 (LGGA…YTLL), 170–192 (PLAV…LLAF), 202–224 (GLAY…WYSA), 231–253 (IQGA…LLLG), and 263–280 (ATLA…PRLG). EamA domains follow at residues 15–136 (LAFA…FLLL) and 155–276 (LAWG…LILA).

It localises to the cell membrane. This is an uncharacterized protein from Pseudomonas aeruginosa (strain ATCC 15692 / DSM 22644 / CIP 104116 / JCM 14847 / LMG 12228 / 1C / PRS 101 / PAO1).